We begin with the raw amino-acid sequence, 253 residues long: MLSKKFGLSMIVLGIMSSSAFADSIVEGRTLNVAVSPASPPMLFKSADGKLQGIDLELFSSYCQSRHCKLNITEYAWDGMLGAVASGQADVAFSGISITDKRKKVIDFSEPYYINSFYLVSMANHKITLNNLNELNKYSIGYPRGMAYSDLIKNDLEPKGYYSLSKVKLYPTYNETMADLKNGNLDLAFIEEPVYFTFKNKKKMPIESRYVFKNVDQLGIAFKKGSPVRDDFNLWLKEQGPQKISGIVDSWMK.

The N-terminal stretch at 1 to 22 (MLSKKFGLSMIVLGIMSSSAFA) is a signal peptide. D-alanine contacts are provided by glycine 95, serine 97, arginine 102, alanine 147, and glutamate 191.

The protein belongs to the bacterial solute-binding protein 3 family. In terms of assembly, monomer.

The protein localises to the periplasm. Functionally, part of the ABC transporter complex dalSTUV, that imports D-alanine into the cytoplasm. Helps protect the organism from oxidative killing by host neutrophils through sequestration of D-alanine, a substrate that is converted to hydrogen peroxide by the host enzyme DAO (D-amino acid oxidase). DalS shuttles D-alanine from the periplasm to the DalTUV complex situated in the inner membrane and through hydrolysis of ATP, D-alanine is transported across the membrane into the cytoplasm. Not required for the metabolism of D-alanine found in the stem peptide of peptidoglycan. The polypeptide is ABC transporter D-alanine-binding periplasmic protein (Salmonella typhimurium (strain LT2 / SGSC1412 / ATCC 700720)).